The primary structure comprises 427 residues: MGKTTAEKIFASHLVDEPFSGTKVLRLDVVMCHEITTPIAIADLMARGKDRVFDPTKIKAVIDHVTPSKDSKTATQAKMLRDWARRHAIKDFFDVGHNGVCHALFPEKGYIRPGYTVIMGDSHTCTHGAFGAFAAGVGTTDLEVGILKGVCAFREPKSIRINLNGTLPKGVYAKDVILYVIGQLGVNGATDRVMEFRGPVVDAMTMESRMTLCNMAIEAGGTSGICMPDMVTVEYLWPFIENEYPSKEAALAEFSTWRSDDDAVYERVLDFDVSVLEPIVTFGYKPDQVKPISEIAGSPVDQVYLGSCTNGRLEDLRIAARILKGKKIAPSVRGILSPATPKIYKDAMAEGLIDIFMEAGFCVTNPTCGACLGMSNGVLAEGEVCASTTNRNFMGRMGKGGMVHLMSPATSAATAIEGVIADPRKYL.

[4Fe-4S] cluster-binding residues include C308, C368, and C371.

Belongs to the aconitase/IPM isomerase family. LeuC type 2 subfamily. Heterodimer of LeuC and LeuD. The cofactor is [4Fe-4S] cluster.

The enzyme catalyses (2R,3S)-3-isopropylmalate = (2S)-2-isopropylmalate. It functions in the pathway amino-acid biosynthesis; L-leucine biosynthesis; L-leucine from 3-methyl-2-oxobutanoate: step 2/4. Catalyzes the isomerization between 2-isopropylmalate and 3-isopropylmalate, via the formation of 2-isopropylmaleate. This is 3-isopropylmalate dehydratase large subunit from Geobacter metallireducens (strain ATCC 53774 / DSM 7210 / GS-15).